Reading from the N-terminus, the 233-residue chain is Large ribosomal subunit protein uL1 (233 aa).

This sequence belongs to the universal ribosomal protein uL1 family. In terms of assembly, part of the 50S ribosomal subunit.

Binds directly to 23S rRNA. The L1 stalk is quite mobile in the ribosome, and is involved in E site tRNA release. Functionally, protein L1 is also a translational repressor protein, it controls the translation of the L11 operon by binding to its mRNA. This chain is Large ribosomal subunit protein uL1, found in Paracoccus denitrificans (strain Pd 1222).